The sequence spans 383 residues: Prokineticin receptor 2 (383 aa).

The Extracellular segment spans residues 1 to 54 (MGDQNGNTSFAPDLNPPQDHVSLLPLNYSYGDYDIPLDDDEDVTKTQTFFAAKI). N-linked (GlcNAc...) asparagine glycosylation is found at Asn-7 and Asn-27. The helical transmembrane segment at 55–75 (VIGVALAGIMLVCGVGNFVFI) threads the bilayer. The Cytoplasmic segment spans residues 76 to 89 (AALARYKKLRNLTN). A helical membrane pass occupies residues 90-110 (LLIANLAISDFLVAIVCCPFE). The Extracellular segment spans residues 111–136 (MDYYVVRQLSWEHGHVLCASVNYLRT). Cys-128 and Cys-207 are oxidised to a cystine. A helical membrane pass occupies residues 137–157 (VSLYVSTNALLAIAIDRYLAI). The Cytoplasmic portion of the chain corresponds to 158-170 (VHPLKRMNYQTAS). The chain crosses the membrane as a helical span at residues 171-191 (FLIALVWMVSILIAIPSAYFT). At 192–222 (TETILVIVKNQEKLFCGQIWPVDQQLYYKSY) the chain is on the extracellular side. A helical membrane pass occupies residues 223–243 (FLFVFGLEFVGPVVTMTLCYA). At 244 to 272 (RISQELWFKAVPGFQTEQIRKRLRCRRKT) the chain is on the cytoplasmic side. Residues 273–293 (VLLLMGILTAYVLCWAPFYGF) traverse the membrane as a helical segment. Over 294-312 (TIVRDFFPTLVVKEKHYLT) the chain is Extracellular. A helical transmembrane segment spans residues 313–333 (AFYVVECIAMSNSMINTICFV). Residues 334–383 (TVKNNTMKYFKKMLLLHWRPSHYGSKSSADLDLKTSGVPATEEVDCIRLK) lie on the Cytoplasmic side of the membrane.

Belongs to the G-protein coupled receptor 1 family. In terms of assembly, homodimer. As to expression, abundantly expressed in the CNS and reproductive organs with the highest levels in the cerebrum, cerebellum, testis and ovary.

Its subcellular location is the cell membrane. Receptor for prokineticin 2. Exclusively coupled to the G(q) subclass of heteromeric G proteins. Activation leads to mobilization of calcium, stimulation of phosphoinositide turnover and activation of p44/p42 mitogen-activated protein kinase. The sequence is that of Prokineticin receptor 2 (Prokr2) from Rattus norvegicus (Rat).